Consider the following 559-residue polypeptide: Glucosylglycerate phosphorylase (559 aa).

D229 acts as the Nucleophile in catalysis.

The protein belongs to the glycosyl hydrolase 13 family. Glucosylglycerate phosphorylase subfamily.

It carries out the reaction (2R)-2-O-(alpha-D-glucopyranosyl)-glycerate + phosphate = (R)-glycerate + alpha-D-glucose 1-phosphate. In terms of biological role, catalyzes the reversible phosphorolysis of glucosylglycerate into alpha-D-glucose 1-phosphate (Glc1P) and D-glycerate (also called (R)-glycerate). May be a regulator of intracellular levels of glucosylglycerate, a compatible solute that primarily protects organisms facing salt stress and very specific nutritional constraints. Cannot catalyze the phosphorolysis of sucrose. Does not act on other sugars such as alpha-D-galactose 1-phosphate, alpha-D-mannose 1-phosphate or beta-D-glucose 1-phosphate; in vitro D-erythronate can substitute for D-glycerate with a much lower efficiency. The chain is Glucosylglycerate phosphorylase (ycjM) from Escherichia coli (strain K12).